A 499-amino-acid polypeptide reads, in one-letter code: T-cell activation inhibitor, mitochondrial (499 aa).

Residues 206 to 233 adopt a coiled-coil conformation; that stretch reads LRNSLPLRKELDRLKNELSELLQLSDIR.

Expressed in peripheral blood leukocytes, mainly in T-lymphocytes.

The protein resides in the mitochondrion. Functionally, may regulate T-cell apoptosis. The chain is T-cell activation inhibitor, mitochondrial (TCAIM) from Mus musculus (Mouse).